The chain runs to 283 residues: Putative aquaporin NIP4-1 (283 aa).

M1 carries the N-acetylmethionine modification. 2 helical membrane passes run 45–65 and 70–90; these read LIAEMIGTYFIVFSGCGVVVV and GGTITFPGICVTWGLIVMVMI. The NPA 1 motif lies at 102–104; that stretch reads NPA. 3 consecutive transmembrane segments (helical) span residues 122-142, 161-181, and 189-209; these read LYIGAQFAGSLLASLTLRLMF, ALVAEIIISFLLMFVISGVAT, and LAGIAVGMTIMVNVFVAGPIS. The NPA 2 signature appears at 214–216; it reads NPA. Residues 231 to 251 traverse the membrane as a helical segment; it reads IWVYIVGPVLGVISGGFVYNL. The residue at position 267 (S267) is a Phosphoserine.

The protein belongs to the MIP/aquaporin (TC 1.A.8) family. NIP (TC 1.A.8.12) subfamily.

Its subcellular location is the membrane. Its function is as follows. Potential aquaporin, which may facilitate the transport of water and small neutral solutes across cell membranes. The protein is Putative aquaporin NIP4-1 (NIP4-1) of Arabidopsis thaliana (Mouse-ear cress).